Consider the following 428-residue polypeptide: MSVKWEKLEGNEGVLTVEVDAEKVNEGLDAAFKKVVKNIAIPGFRKGKVPRVIFEKRFGVEALYQDALDILLPEAYAKAVEEAGIEPVDVPKIDIEQMEKGKSLIFTAKVTVKPEVKLGQYKGLEVEKMDDTVTDEDVENELKRLQENYAELVVKEDGKVENGDTAVIDFEGFVDGEPFEGGKAENYSLEIGSGTFIPGFEDQLIGMQAGEEKEIEVTFPEEYHAKELAGKPATFKVKVHEIKEKRLPALDDEFAKDVDDEVETLEQLKDKIRKRLEEMKKNEAEAALRDAVVEKAAENAEIDIPEVMVKNETDRMLREFDQRLQMQGLNLELYYQFSGQDEAALREQMKEDAEKRVRVALTIEAIAKAENIEVTEEEINEELEKMAKAYNLEVEKLKELLGNLDGVKEDLKWRKTIDFLVENSKVAA.

The PPIase FKBP-type domain maps to 163-248 (GDTAVIDFEG…VHEIKEKRLP (86 aa)).

The protein belongs to the FKBP-type PPIase family. Tig subfamily.

The protein localises to the cytoplasm. It carries out the reaction [protein]-peptidylproline (omega=180) = [protein]-peptidylproline (omega=0). Its function is as follows. Involved in protein export. Acts as a chaperone by maintaining the newly synthesized protein in an open conformation. Functions as a peptidyl-prolyl cis-trans isomerase. This is Trigger factor from Geobacillus sp. (strain WCH70).